Here is a 125-residue protein sequence, read N- to C-terminus: Putative glutaredoxin-C2 (125 aa).

The region spanning 2–103 (AERVARLSSQ…PLLREAGALW (102 aa)) is the Glutaredoxin domain. The cysteines at positions 22 and 25 are disulfide-linked.

The protein belongs to the glutaredoxin family. CC-type subfamily.

It is found in the cytoplasm. Functionally, has a glutathione-disulfide oxidoreductase activity in the presence of NADPH and glutathione reductase. Reduces low molecular weight disulfides and proteins. This is Putative glutaredoxin-C2 (GRXC2) from Oryza sativa subsp. japonica (Rice).